Reading from the N-terminus, the 305-residue chain is MQRLSPGEFKTLISKERKSHFITPFALVYKTFCDLGYDQKNSDYFLNNPSEYIIAMRKNCWKEFEPFEKEFTTRMLSYLIDEERIKDMSPYDAIRDFTMEYPTHIYDLALSNTQSRRSRAGKEFESILELLMMGAGIPVDVQGAIGKSFFQKNQIGKLVDLVMPGVVQYTSNKRNTMLISAKTTLRERWQEVPEEVNRTGIREMYLATLDDSFSEETINILYEANVVVVTTIENKNFKYKNNNRVLTFEDMLQSAMELSRKWNNVSYTDSEKEEIQRSILKQIEKYSDFPYVVNYYRNRLSALFD.

The enzyme catalyses Endonucleolytic cleavage of DNA to give specific double-stranded fragments with terminal 5'-phosphates.. Functionally, a P subtype restriction enzyme that recognizes the double-stranded sequence 5'-CCNGG-3' and cleaves before C-1. This chain is Type II restriction enzyme SsoII (ssoIIR), found in Shigella sonnei.